The primary structure comprises 314 residues: Polyamine aminopropyltransferase (314 aa).

The PABS domain maps to G4–D241. Q33 is a binding site for S-methyl-5'-thioadenosine. Spermidine is bound by residues H64 and E88. Residues D108 and D140 to A141 each bind S-methyl-5'-thioadenosine. The active-site Proton acceptor is the D158. An S-methyl-5'-thioadenosine-binding site is contributed by P168.

The protein belongs to the spermidine/spermine synthase family. As to quaternary structure, homodimer or homotetramer.

Its subcellular location is the cytoplasm. The catalysed reaction is S-adenosyl 3-(methylsulfanyl)propylamine + putrescine = S-methyl-5'-thioadenosine + spermidine + H(+). The protein operates within amine and polyamine biosynthesis; spermidine biosynthesis; spermidine from putrescine: step 1/1. Its function is as follows. Catalyzes the irreversible transfer of a propylamine group from the amino donor S-adenosylmethioninamine (decarboxy-AdoMet) to putrescine (1,4-diaminobutane) to yield spermidine. In Thermus thermophilus (strain ATCC BAA-163 / DSM 7039 / HB27), this protein is Polyamine aminopropyltransferase.